A 194-amino-acid polypeptide reads, in one-letter code: Phosphoheptose isomerase (194 aa).

The SIS domain occupies 37–194; the sequence is ISNSFKQGGK…LIEFEMAKQA (158 aa). Residue 52–54 participates in substrate binding; that stretch reads NGG. Residues histidine 61 and glutamate 65 each coordinate Zn(2+). Residues glutamate 65, 93–94, 119–121, serine 124, and glutamine 172 contribute to the substrate site; these read ND and STS. Zn(2+) is bound by residues glutamine 172 and histidine 180.

The protein belongs to the SIS family. GmhA subfamily. In terms of assembly, homotetramer. It depends on Zn(2+) as a cofactor.

The protein resides in the cytoplasm. It carries out the reaction 2 D-sedoheptulose 7-phosphate = D-glycero-alpha-D-manno-heptose 7-phosphate + D-glycero-beta-D-manno-heptose 7-phosphate. It participates in carbohydrate biosynthesis; D-glycero-D-manno-heptose 7-phosphate biosynthesis; D-glycero-alpha-D-manno-heptose 7-phosphate and D-glycero-beta-D-manno-heptose 7-phosphate from sedoheptulose 7-phosphate: step 1/1. Its function is as follows. Catalyzes the isomerization of sedoheptulose 7-phosphate in D-glycero-D-manno-heptose 7-phosphate. This is Phosphoheptose isomerase from Actinobacillus pleuropneumoniae serotype 5b (strain L20).